The chain runs to 340 residues: Armadillo repeat-containing protein 12 (340 aa).

Positions 1 to 101 are interaction with TBC1D15; the sequence is MGKTIPRFLE…NITRCVYLLE (101 aa). ARM repeat units lie at residues 100-139, 179-218, and 278-318; these read LEAEASSCTMDDIDLVADMLDEKDNSVKIQALNALKAFSG, LPDYVHPQLRRVMPALMEIIQSDCILAQVQAVRLLSYLAQ, and SLHE…SLQC. The interval 321-340 is disordered; that stretch reads DLGSRPSSCRPSHSCFKTGK. Residues 324–340 are compositionally biased toward low complexity; sequence SRPSSCRPSHSCFKTGK.

Interacts with TBC1D15, TBC1D21, GK2 and IMMT. Interacts with VDAC2 and VDAC3 in a TBC1D21-dependent manner. Interacts (via ARM domains) with RBBP4. As to expression, testis-specific.

It is found in the nucleus. Its subcellular location is the mitochondrion outer membrane. Its function is as follows. Essential for male fertility and sperm mitochondrial sheath formation. Required for proper mitochondrial elongation and coiling along the flagellum during the formation of the mitochondrial sheath. Facilitates the growth and aggressiveness of neuroblastoma cells. Increases the EZH2 activity and H3K27me3 levels in a RBBP4-dependent manner, and facilitates the enrichment of polycomb repressive complex 2 and H3K27me3 on gene promoters, resulting in transcriptional repression of tumor suppressors affecting the proliferation, invasion, and metastasis of tumor cells. In Mus musculus (Mouse), this protein is Armadillo repeat-containing protein 12 (Armc12).